The sequence spans 79 residues: uncharacterized protein (79 aa).

It belongs to the asfivirus D79L family.

This is an uncharacterized protein from African swine fever virus (isolate Tick/South Africa/Pretoriuskop Pr4/1996) (ASFV).